Reading from the N-terminus, the 214-residue chain is Small ribosomal subunit protein uS3 (214 aa).

The KH type-2 domain maps to 39 to 107; sequence IRAYLLKKPA…EVWVAVEEVK (69 aa).

This sequence belongs to the universal ribosomal protein uS3 family. Part of the 30S ribosomal subunit. Forms a tight complex with proteins S10 and S14.

Functionally, binds the lower part of the 30S subunit head. Binds mRNA in the 70S ribosome, positioning it for translation. This chain is Small ribosomal subunit protein uS3, found in Protochlamydia amoebophila (strain UWE25).